The primary structure comprises 730 residues: Probable palmitoyltransferase AKR2 (730 aa).

ANK repeat units lie at residues 32 to 62, 66 to 95, 100 to 129, 133 to 166, 172 to 201, and 205 to 234; these read FVVETFIEAIKDDDLKVVKEVVESGAIDINK, DELPGLHWACIKNRFSIAKFLIRRGANVNQ, ERATALHWAARYGHVYIVDLLLKHGANPTL, QGLNILHFSVYSSNIMLVVYVLYFVVSNNNNVDI, NNRTPLLWAAYQGDFLTVELLLKFGATVAL, and RGFNALHCALVGGDQRAICDLILSGANFYE. 4 helical membrane passes run 283–303, 309–328, 344–364, and 376–396; these read LMIFLSPFALMIYTYLISLIL, IALSLLVIVVTVNSLKKFVL, TPFFSGLFMSTFSFLLFIWVK, and AKDAQLLITSLFTFVLFLKLV. One can recognise a DHHC domain in the interval 429-479; the sequence is NFCVETLERKPLRSKYSLFSGALVARFNHYCPWVYNDIGLKNHKLFMFFAF. Cys459 serves as the catalytic S-palmitoyl cysteine intermediate. 2 consecutive transmembrane segments (helical) span residues 473 to 493 and 530 to 550; these read LFMFFAFSVQYEMFLFMWLCL and TFFLFIWISMNFVWLGGMLIV.

The protein belongs to the DHHC palmitoyltransferase family. AKR/ZDHHC17 subfamily.

It localises to the membrane. It catalyses the reaction L-cysteinyl-[protein] + hexadecanoyl-CoA = S-hexadecanoyl-L-cysteinyl-[protein] + CoA. This Saccharomyces uvarum (strain ATCC 76518 / CBS 7001 / CLIB 283 / NBRC 10550 / MCYC 623 / NCYC 2669 / NRRL Y-11845) (Yeast) protein is Probable palmitoyltransferase AKR2 (AKR2).